The sequence spans 454 residues: Pup--protein ligase (454 aa).

Glutamate 9 contacts Mg(2+). Arginine 53 lines the ATP pocket. Mg(2+) is bound at residue tyrosine 55. Catalysis depends on aspartate 57, which acts as the Proton acceptor. Mg(2+) is bound at residue glutamate 63. The ATP site is built by threonine 66 and tryptophan 420.

Belongs to the Pup ligase/Pup deamidase family. Pup-conjugating enzyme subfamily.

The catalysed reaction is ATP + [prokaryotic ubiquitin-like protein]-L-glutamate + [protein]-L-lysine = ADP + phosphate + N(6)-([prokaryotic ubiquitin-like protein]-gamma-L-glutamyl)-[protein]-L-lysine.. It participates in protein degradation; proteasomal Pup-dependent pathway. It functions in the pathway protein modification; protein pupylation. Catalyzes the covalent attachment of the prokaryotic ubiquitin-like protein modifier Pup to the proteasomal substrate proteins, thereby targeting them for proteasomal degradation. This tagging system is termed pupylation. The ligation reaction involves the side-chain carboxylate of the C-terminal glutamate of Pup and the side-chain amino group of a substrate lysine. The protein is Pup--protein ligase of Paenarthrobacter aurescens (strain TC1).